Consider the following 293-residue polypeptide: Ribosomal RNA small subunit methyltransferase H (293 aa).

S-adenosyl-L-methionine-binding positions include 31-33 (GGY), Asp-49, Phe-76, Asp-97, and Gln-104.

The protein belongs to the methyltransferase superfamily. RsmH family.

It localises to the cytoplasm. The catalysed reaction is cytidine(1402) in 16S rRNA + S-adenosyl-L-methionine = N(4)-methylcytidine(1402) in 16S rRNA + S-adenosyl-L-homocysteine + H(+). In terms of biological role, specifically methylates the N4 position of cytidine in position 1402 (C1402) of 16S rRNA. The protein is Ribosomal RNA small subunit methyltransferase H of Wolbachia sp. subsp. Drosophila simulans (strain wRi).